The sequence spans 193 residues: Recombination protein RecR (193 aa).

The segment at 61 to 76 adopts a C4-type zinc-finger fold; the sequence is CASCNALSESEICEIC. Positions 84-170 constitute a Toprim domain; sequence SQLCMVLHPR…TFTKIAQGVP (87 aa).

This sequence belongs to the RecR family.

May play a role in DNA repair. It seems to be involved in an RecBC-independent recombinational process of DNA repair. It may act with RecF and RecO. The chain is Recombination protein RecR from Helicobacter pylori (strain Shi470).